Consider the following 388-residue polypeptide: Na(+)/H(+) antiporter NhaA (388 aa).

The next 11 membrane-spanning stretches (helical) occupy residues 14–34, 59–79, 95–115, 125–145, 154–174, 179–199, 219–239, 254–274, 292–312, 328–348, and 360–380; these read GGIILIIAAALAMLMANMGAT, MLLWINDALMAVFFLLIGLEV, AFPVIAAIGGMIVPALLYLAF, GWAIPAATDIAFALGVLALLG, IFLMALAIIDDLGAIIIIALF, LSIVSLGVAAFAIAVLALLNL, VLKSGVHATLAGVIVGFFIPL, VLHPWVAYLILPLFAFANAGV, IIAGLLIGKPLGISLFCWLAL, IMAVGILCGIGFTMSIFIASL, and WAKLGILIGSLLSAVVGYSWL.

It belongs to the NhaA Na(+)/H(+) (TC 2.A.33) antiporter family.

The protein localises to the cell inner membrane. The catalysed reaction is Na(+)(in) + 2 H(+)(out) = Na(+)(out) + 2 H(+)(in). In terms of biological role, na(+)/H(+) antiporter that extrudes sodium in exchange for external protons. The chain is Na(+)/H(+) antiporter NhaA from Salmonella paratyphi A (strain ATCC 9150 / SARB42).